We begin with the raw amino-acid sequence, 97 residues long: ADAPAGFTLCKACHSVEAGKNGVGPSLAGVYGRKAGTISGFKFSDPHIKSGLTWDEPTLTKYLADPKTVIPGNKMVFAGLKNPDDVKAVIEYLKTLK.

The heme c site is built by cysteine 10, cysteine 13, histidine 14, and methionine 75.

It belongs to the cytochrome c family. Binds 1 heme c group covalently per subunit.

Its function is as follows. Cytochrome c2 is found mainly in purple, non-sulfur, photosynthetic bacteria where it functions as the electron donor to the oxidized bacteriochlorophyll in the photophosphorylation pathway. However, it may also have a role in the respiratory chain and is found in some non-photosynthetic bacteria. The polypeptide is Cytochrome c2 iso-2 (Magnetospirillum molischianum (Rhodospirillum molischianum)).